Reading from the N-terminus, the 381-residue chain is Ribosome assembly 1 protein (381 aa).

M1 carries the post-translational modification N-acetylmethionine. 3 disordered regions span residues 1–38 (MNYNNFENSKGDGHSRLPKPTYSGTLSDGYDESKIKRQ), 164–216 (KDTF…DRDE), and 350–381 (FGSSEDNNKNHYKPNYKNRKPNLSRANFTRNK). Residue S172 is modified to Phosphoserine. The segment covering 359-371 (NHYKPNYKNRKPN) has biased composition (basic residues).

The protein localises to the nucleus. Involved in a late nucleoplasmic step of 60S ribosomal subunit assembly. The protein is Ribosome assembly 1 protein (RSA1) of Saccharomyces cerevisiae (strain ATCC 204508 / S288c) (Baker's yeast).